The chain runs to 48 residues: ATP synthase protein 8 (48 aa).

The helical transmembrane segment at 12-32 (QLTYGLLLITVLLILFSQFFL) threads the bilayer.

It belongs to the ATPase protein 8 family. As to quaternary structure, F-type ATPases have 2 components, CF(1) - the catalytic core - and CF(0) - the membrane proton channel.

The protein localises to the mitochondrion membrane. In terms of biological role, mitochondrial membrane ATP synthase (F(1)F(0) ATP synthase or Complex V) produces ATP from ADP in the presence of a proton gradient across the membrane which is generated by electron transport complexes of the respiratory chain. F-type ATPases consist of two structural domains, F(1) - containing the extramembraneous catalytic core and F(0) - containing the membrane proton channel, linked together by a central stalk and a peripheral stalk. During catalysis, ATP synthesis in the catalytic domain of F(1) is coupled via a rotary mechanism of the central stalk subunits to proton translocation. Part of the complex F(0) domain. Minor subunit located with subunit a in the membrane. The protein is ATP synthase protein 8 (ATP8) of Candida glabrata (strain ATCC 2001 / BCRC 20586 / JCM 3761 / NBRC 0622 / NRRL Y-65 / CBS 138) (Yeast).